Here is a 142-residue protein sequence, read N- to C-terminus: Ctenidin-3 (142 aa).

A signal peptide spans 1-19 (MKHLIPLIVMASVVLAVYA). A Tyrosine amide modification is found at Tyr139.

As to expression, expressed in hemocytes (at protein level).

The protein localises to the secreted. In terms of biological role, antimicrobial protein with bacteriostatic activity against the Gram-negative bacterium E.coli, and very weak activity against the Gram-positive bacterium S.aureus. Lacks activity against the yeast C.albicans. This is Ctenidin-3 from Cupiennius salei (American wandering spider).